A 291-amino-acid chain; its full sequence is Pyridoxal 5'-phosphate synthase subunit PdxS (291 aa).

D-ribose 5-phosphate is bound at residue D23. K80 acts as the Schiff-base intermediate with D-ribose 5-phosphate in catalysis. G152 contributes to the D-ribose 5-phosphate binding site. R164 is a D-glyceraldehyde 3-phosphate binding site. Residues G213 and G234–S235 each bind D-ribose 5-phosphate.

It belongs to the PdxS/SNZ family. In terms of assembly, in the presence of PdxT, forms a dodecamer of heterodimers.

It carries out the reaction aldehydo-D-ribose 5-phosphate + D-glyceraldehyde 3-phosphate + L-glutamine = pyridoxal 5'-phosphate + L-glutamate + phosphate + 3 H2O + H(+). Its pathway is cofactor biosynthesis; pyridoxal 5'-phosphate biosynthesis. Functionally, catalyzes the formation of pyridoxal 5'-phosphate from ribose 5-phosphate (RBP), glyceraldehyde 3-phosphate (G3P) and ammonia. The ammonia is provided by the PdxT subunit. Can also use ribulose 5-phosphate and dihydroxyacetone phosphate as substrates, resulting from enzyme-catalyzed isomerization of RBP and G3P, respectively. This chain is Pyridoxal 5'-phosphate synthase subunit PdxS, found in Bifidobacterium longum (strain DJO10A).